A 902-amino-acid chain; its full sequence is Proline-rich transmembrane protein 4 (902 aa).

Residues 1–18 (MAGRSCLELGLFCWVLLA) form the signal peptide. Disordered regions lie at residues 72–92 (TETHPLSPGLGQESEEEEEGD), 121–149 (TPWASSLPPESTSRLSGPTKRPTAHSQPR), and 281–333 (SPSS…LLDD). 2 stretches are compositionally biased toward polar residues: residues 122–136 (PWASSLPPESTSRLS) and 281–302 (SPSSASVKTTPVQQDPTVSTSG). The next 5 helical transmembrane spans lie at 371–391 (AGALFGLVALLALLALALLPW), 393–413 (CPPGAPCLALLDLLLLSAGTT), 432–452 (LVWLLLQDLPLPCLAAGLGLA), 468–488 (LAALLLLGLGLAAAAALGSAV), and 501–521 (GLHAFLAAFLSGLLLALSCWG). Ser-642 is modified (phosphoserine). 3 disordered regions span residues 701-723 (AGANPTQSTASSPSSDCTVDFRP), 774-811 (AGPSEKSENVPGSPAPPELPSPGAWPPGSSASSGSLCG), and 839-872 (PPRPSESSPSLPASGSYQALSPPSRDSPEHASEL). A compositionally biased stretch (polar residues) spans 704–717 (NPTQSTASSPSSDC). Positions 786 to 798 (SPAPPELPSPGAW) are enriched in pro residues. Low complexity-rich tracts occupy residues 799 to 811 (PPGSSASSGSLCG) and 843 to 854 (SESSPSLPASGS).

The protein resides in the membrane. The sequence is that of Proline-rich transmembrane protein 4 (Prrt4) from Mus musculus (Mouse).